Here is a 218-residue protein sequence, read N- to C-terminus: Protein GrpE (218 aa).

Basic and acidic residues predominate over residues 1-21; the sequence is MSDKQREAERQQSEDKAHSEA. Residues 1–66 are disordered; it reads MSDKQREAER…LEEARARAEE (66 aa). Residues 24–36 show a composition bias toward low complexity; the sequence is AEAGQAPEAQAAE.

It belongs to the GrpE family. Homodimer.

It is found in the cytoplasm. Its function is as follows. Participates actively in the response to hyperosmotic and heat shock by preventing the aggregation of stress-denatured proteins, in association with DnaK and GrpE. It is the nucleotide exchange factor for DnaK and may function as a thermosensor. Unfolded proteins bind initially to DnaJ; upon interaction with the DnaJ-bound protein, DnaK hydrolyzes its bound ATP, resulting in the formation of a stable complex. GrpE releases ADP from DnaK; ATP binding to DnaK triggers the release of the substrate protein, thus completing the reaction cycle. Several rounds of ATP-dependent interactions between DnaJ, DnaK and GrpE are required for fully efficient folding. This Alkalilimnicola ehrlichii (strain ATCC BAA-1101 / DSM 17681 / MLHE-1) protein is Protein GrpE.